Reading from the N-terminus, the 383-residue chain is Chorismate synthase (383 aa).

2 residues coordinate NADP(+): Arg39 and Arg45. FMN-binding positions include 128–130 (RAS), Gly291, 306–310 (KPIAT), and Arg332.

The protein belongs to the chorismate synthase family. As to quaternary structure, homotetramer. It depends on FMNH2 as a cofactor.

The catalysed reaction is 5-O-(1-carboxyvinyl)-3-phosphoshikimate = chorismate + phosphate. The protein operates within metabolic intermediate biosynthesis; chorismate biosynthesis; chorismate from D-erythrose 4-phosphate and phosphoenolpyruvate: step 7/7. In terms of biological role, catalyzes the anti-1,4-elimination of the C-3 phosphate and the C-6 proR hydrogen from 5-enolpyruvylshikimate-3-phosphate (EPSP) to yield chorismate, which is the branch point compound that serves as the starting substrate for the three terminal pathways of aromatic amino acid biosynthesis. This reaction introduces a second double bond into the aromatic ring system. This chain is Chorismate synthase, found in Thermus thermophilus (strain ATCC BAA-163 / DSM 7039 / HB27).